Consider the following 338-residue polypeptide: Glycerol-3-phosphate dehydrogenase [NAD(P)+] (338 aa).

S14, Y15, H35, and K109 together coordinate NADPH. Sn-glycerol 3-phosphate contacts are provided by K109, G138, and T140. NADPH is bound at residue A142. Residues K194, D247, S257, R258, and N259 each coordinate sn-glycerol 3-phosphate. K194 acts as the Proton acceptor in catalysis. R258 lines the NADPH pocket. V282 and E284 together coordinate NADPH.

The protein belongs to the NAD-dependent glycerol-3-phosphate dehydrogenase family.

The protein localises to the cytoplasm. The enzyme catalyses sn-glycerol 3-phosphate + NAD(+) = dihydroxyacetone phosphate + NADH + H(+). It carries out the reaction sn-glycerol 3-phosphate + NADP(+) = dihydroxyacetone phosphate + NADPH + H(+). The protein operates within membrane lipid metabolism; glycerophospholipid metabolism. Its function is as follows. Catalyzes the reduction of the glycolytic intermediate dihydroxyacetone phosphate (DHAP) to sn-glycerol 3-phosphate (G3P), the key precursor for phospholipid synthesis. This is Glycerol-3-phosphate dehydrogenase [NAD(P)+] from Sodalis glossinidius (strain morsitans).